The primary structure comprises 169 residues: Aspartic protease inhibitor 3 (169 aa).

Residue N1 is glycosylated (N-linked (GlcNAc...) asparagine). Intrachain disulfides connect C30/C75 and C124/C134.

Belongs to the protease inhibitor I3 (leguminous Kunitz-type inhibitor) family.

The protein localises to the vacuole. Functionally, inhibitor of cathepsin D (aspartic protease). May also inhibit trypsin and chymotrypsin (serine proteases). Protects the plant by inhibiting proteases of invading organisms. In Solanum tuberosum (Potato), this protein is Aspartic protease inhibitor 3.